The sequence spans 282 residues: Bis(5'-nucleosyl)-tetraphosphatase, symmetrical (282 aa).

The protein belongs to the Ap4A hydrolase family.

The catalysed reaction is P(1),P(4)-bis(5'-adenosyl) tetraphosphate + H2O = 2 ADP + 2 H(+). Functionally, hydrolyzes diadenosine 5',5'''-P1,P4-tetraphosphate to yield ADP. The protein is Bis(5'-nucleosyl)-tetraphosphatase, symmetrical of Paraburkholderia phymatum (strain DSM 17167 / CIP 108236 / LMG 21445 / STM815) (Burkholderia phymatum).